We begin with the raw amino-acid sequence, 331 residues long: Anthranilate phosphoribosyltransferase (331 aa).

5-phospho-alpha-D-ribose 1-diphosphate-binding positions include G79, 82-83 (GD), T87, 89-92 (NIST), 107-115 (KHGNYGATS), and A119. G79 lines the anthranilate pocket. S91 is a Mg(2+) binding site. N110 contributes to the anthranilate binding site. R165 contributes to the anthranilate binding site. The Mg(2+) site is built by D223 and E224.

It belongs to the anthranilate phosphoribosyltransferase family. Homodimer. Mg(2+) is required as a cofactor.

The enzyme catalyses N-(5-phospho-beta-D-ribosyl)anthranilate + diphosphate = 5-phospho-alpha-D-ribose 1-diphosphate + anthranilate. It functions in the pathway amino-acid biosynthesis; L-tryptophan biosynthesis; L-tryptophan from chorismate: step 2/5. Catalyzes the transfer of the phosphoribosyl group of 5-phosphorylribose-1-pyrophosphate (PRPP) to anthranilate to yield N-(5'-phosphoribosyl)-anthranilate (PRA). This Phocaeicola vulgatus (strain ATCC 8482 / DSM 1447 / JCM 5826 / CCUG 4940 / NBRC 14291 / NCTC 11154) (Bacteroides vulgatus) protein is Anthranilate phosphoribosyltransferase.